Here is a 494-residue protein sequence, read N- to C-terminus: 2,3-bisphosphoglycerate-independent phosphoglycerate mutase (494 aa).

D12 and S62 together coordinate Mn(2+). S62 functions as the Phosphoserine intermediate in the catalytic mechanism. Residues H121, R150 to D151, R181, R187, R252 to R255, and K317 contribute to the substrate site. 5 residues coordinate Mn(2+): D384, H388, D425, H426, and H443.

This sequence belongs to the BPG-independent phosphoglycerate mutase family. As to quaternary structure, monomer. Requires Mn(2+) as cofactor.

The enzyme catalyses (2R)-2-phosphoglycerate = (2R)-3-phosphoglycerate. It functions in the pathway carbohydrate degradation; glycolysis; pyruvate from D-glyceraldehyde 3-phosphate: step 3/5. In terms of biological role, catalyzes the interconversion of 2-phosphoglycerate and 3-phosphoglycerate. In Anaplasma marginale (strain St. Maries), this protein is 2,3-bisphosphoglycerate-independent phosphoglycerate mutase.